The following is a 158-amino-acid chain: NAD(P)H-quinone oxidoreductase subunit J, chloroplastic (158 aa).

Belongs to the complex I 30 kDa subunit family. NDH is composed of at least 16 different subunits, 5 of which are encoded in the nucleus.

The protein resides in the plastid. Its subcellular location is the chloroplast thylakoid membrane. It catalyses the reaction a plastoquinone + NADH + (n+1) H(+)(in) = a plastoquinol + NAD(+) + n H(+)(out). It carries out the reaction a plastoquinone + NADPH + (n+1) H(+)(in) = a plastoquinol + NADP(+) + n H(+)(out). Functionally, NDH shuttles electrons from NAD(P)H:plastoquinone, via FMN and iron-sulfur (Fe-S) centers, to quinones in the photosynthetic chain and possibly in a chloroplast respiratory chain. The immediate electron acceptor for the enzyme in this species is believed to be plastoquinone. Couples the redox reaction to proton translocation, and thus conserves the redox energy in a proton gradient. The polypeptide is NAD(P)H-quinone oxidoreductase subunit J, chloroplastic (Pelargonium hortorum (Common geranium)).